The primary structure comprises 305 residues: Glutaminase (305 aa).

Positions 61, 113, 158, 165, 189, 241, and 259 each coordinate substrate.

The protein belongs to the glutaminase family. Homotetramer.

It catalyses the reaction L-glutamine + H2O = L-glutamate + NH4(+). The protein is Glutaminase of Clostridium botulinum (strain ATCC 19397 / Type A).